Here is a 162-residue protein sequence, read N- to C-terminus: Phenazine biosynthesis protein PhzB1 (162 aa).

It belongs to the PhzA/PhzB family. In terms of assembly, homodimer.

It participates in antibiotic biosynthesis; phenazine biosynthesis. Functionally, involved in the biosynthesis of the antibiotic phenazine, a nitrogen-containing heterocyclic molecule. PhzB1 (operon phzA1B1C1E1F1G1) has a role in the biosynthesis of the phenazine during planktonic growth. The protein is Phenazine biosynthesis protein PhzB1 of Pseudomonas aeruginosa (strain ATCC 15692 / DSM 22644 / CIP 104116 / JCM 14847 / LMG 12228 / 1C / PRS 101 / PAO1).